The primary structure comprises 153 residues: Large ribosomal subunit protein uL30 (153 aa).

This sequence belongs to the universal ribosomal protein uL30 family. Part of the 50S ribosomal subunit.

The protein is Large ribosomal subunit protein uL30 of Metallosphaera sedula (strain ATCC 51363 / DSM 5348 / JCM 9185 / NBRC 15509 / TH2).